A 361-amino-acid polypeptide reads, in one-letter code: Nicotinate-nucleotide--dimethylbenzimidazole phosphoribosyltransferase (361 aa).

Glu315 serves as the catalytic Proton acceptor.

Belongs to the CobT family.

The catalysed reaction is 5,6-dimethylbenzimidazole + nicotinate beta-D-ribonucleotide = alpha-ribazole 5'-phosphate + nicotinate + H(+). It functions in the pathway nucleoside biosynthesis; alpha-ribazole biosynthesis; alpha-ribazole from 5,6-dimethylbenzimidazole: step 1/2. Its function is as follows. Catalyzes the synthesis of alpha-ribazole-5'-phosphate from nicotinate mononucleotide (NAMN) and 5,6-dimethylbenzimidazole (DMB). The chain is Nicotinate-nucleotide--dimethylbenzimidazole phosphoribosyltransferase from Clostridium perfringens (strain ATCC 13124 / DSM 756 / JCM 1290 / NCIMB 6125 / NCTC 8237 / Type A).